The primary structure comprises 515 residues: Spermatogenesis-associated protein 2 (515 aa).

Residues 78–150 form the PUB domain; sequence ALHCAFSMLE…VYKLKELVES (73 aa). Positions 321 to 338 match the PIM motif motif; the sequence is TYFSTQDDVDLYTDSEPR. Positions 429-452 are disordered; the sequence is GHQTQGLDRLAPVHSKPKPSTTAT.

The protein belongs to the SPATA2 family. Interacts (via the PIM motif) with RNF31/HOIP (via the PUB domain); the interaction is direct. Interacts (via the PUB domain) with CYLD; the interaction is direct. Widely expressed, with highest expression in testis, lung and intestine, and lower expression in brain, heart and spleen. Present at high level in Sertoli cells: expressed from stage I to stage XII of the testis seminiferous epithelium (at protein level).

It localises to the cytoplasm. The protein localises to the nucleus. In terms of biological role, bridging factor that mediates the recruitment of CYLD to the LUBAC complex, thereby regulating TNF-alpha-induced necroptosis. Acts as a direct binding intermediate that bridges RNF31/HOIP, the catalytic subunit of the LUBAC complex, and the deubiquitinase (CYLD), thereby recruiting CYLD to the TNF-R1 signaling complex (TNF-RSC). Required to activate the 'Met-1'- (linear) and 'Lys-63'-linked deubiquitinase activities of CYLD. Controls the kinase activity of RIPK1 and TNF-alpha-induced necroptosis by promoting 'Met-1'-linked deubiquitination of RIPK1 by CYLD. This Mus musculus (Mouse) protein is Spermatogenesis-associated protein 2.